The sequence spans 120 residues: Ribosome-binding factor A (120 aa).

This sequence belongs to the RbfA family. In terms of assembly, monomer. Binds 30S ribosomal subunits, but not 50S ribosomal subunits or 70S ribosomes.

It localises to the cytoplasm. Its function is as follows. One of several proteins that assist in the late maturation steps of the functional core of the 30S ribosomal subunit. Associates with free 30S ribosomal subunits (but not with 30S subunits that are part of 70S ribosomes or polysomes). Required for efficient processing of 16S rRNA. May interact with the 5'-terminal helix region of 16S rRNA. The protein is Ribosome-binding factor A of Desulforamulus reducens (strain ATCC BAA-1160 / DSM 100696 / MI-1) (Desulfotomaculum reducens).